The following is a 518-amino-acid chain: Membrane-bound glycerophospholipid O-acyltransferase 2 (518 aa).

Transmembrane regions (helical) follow at residues 21–41 (PVDQ…AIWF), 60–80 (TLLG…HFVI), 87–107 (YLMI…FALG), 183–203 (FMGI…FIEG), 230–250 (IAVA…MTIT), and 267–283 (ASWP…LMAA). Residues Asn-341 and His-372 contribute to the active site. A run of 3 helical transmembrane segments spans residues 365–385 (FILS…FLTG), 415–435 (IITW…FVLL), and 443–463 (FYSS…LVFP).

It belongs to the membrane-bound acyltransferase family.

The protein localises to the endoplasmic reticulum membrane. The catalysed reaction is a 1-acyl-sn-glycero-3-phosphocholine + an acyl-CoA = a 1,2-diacyl-sn-glycero-3-phosphocholine + CoA. The enzyme catalyses a 1-acyl-sn-glycero-3-phosphoethanolamine + an acyl-CoA = a 1,2-diacyl-sn-glycero-3-phosphoethanolamine + CoA. It carries out the reaction a 1-acyl-sn-glycero-3-phosphate + an acyl-CoA = a 1,2-diacyl-sn-glycero-3-phosphate + CoA. It catalyses the reaction (9Z)-hexadecenoyl-CoA + 1-hexadecanoyl-sn-glycero-3-phosphocholine = 1-hexadecanoyl-2-(9Z-hexadecenoyl)-sn-glycero-3-phosphocholine + CoA. The catalysed reaction is 1-hexadecanoyl-sn-glycero-3-phosphoethanolamine + (9Z)-octadecenoyl-CoA = 1-hexadecanoyl-2-(9Z-octadecenoyl)-sn-glycero-3-phosphoethanolamine + CoA. The enzyme catalyses 1-hexadecanoyl-sn-glycero-3-phosphoethanolamine + (9Z)-hexadecenoyl-CoA = 1-hexadecanoyl-2-(9Z)-hexadecenoyl-sn-glycero-3-phosphoethanolamine + CoA. It carries out the reaction 1-(9Z-octadecenoyl)-sn-glycero-3-phospho-L-serine + hexadecanoyl-CoA = 1-(9Z)-octadecenoyl-2-hexadecanoyl-sn-glycero-3-phosphoserine + CoA. It catalyses the reaction (9Z,12Z)-octadecadienoyl-CoA + 1-hexadecanoyl-sn-glycero-3-phosphocholine = 1-hexadecanoyl-2-(9Z,12Z-octadecadienoyl)-sn-glycero-3-phosphocholine + CoA. The catalysed reaction is 1-hexadecanoyl-sn-glycero-3-phosphocholine + (9Z)-octadecenoyl-CoA = 1-hexadecanoyl-2-(9Z-octadecenoyl)-sn-glycero-3-phosphocholine + CoA. The enzyme catalyses 1-hexadecanoyl-sn-glycero-3-phosphate + (9Z)-hexadecenoyl-CoA = 1-hexadecanoyl-2-[(9Z)-hexadec-9-enoyl]-sn-glycero-3-phosphate + CoA. It carries out the reaction 1-hexadecanoyl-sn-glycero-3-phosphate + (9Z)-octadecenoyl-CoA = 1-hexadecanoyl-2-(9Z-octadecenoyl)-sn-glycero-3-phosphate + CoA. It catalyses the reaction a 1-O-(1Z-alkenyl)-sn-glycero-3-phosphocholine + (9Z)-octadecenoyl-CoA = 1-O-(1Z)-alkenyl-2-(9Z)-octadecenoyl-sn-glycero-3-phosphocholine + CoA. The catalysed reaction is a 1-O-(1Z-alkenyl)-sn-glycero-3-phosphoethanolamine + (9Z)-octadecenoyl-CoA = 1-O-(1Z)-alkenyl-2-(9Z)-octadecenoyl-sn-glycero-3-phosphoethanolamine + CoA. The enzyme catalyses 1-octadecanoyl-sn-glycero-3-phosphoethanolamine + (9Z)-octadecenoyl-CoA = 1-octadecanoyl-2-(9Z-octadecenoyl)-sn-glycero-3-phosphoethanolamine + CoA. It carries out the reaction 1-octadecanoyl-sn-glycero-3-phosphocholine + (9Z)-octadecenoyl-CoA = 1-octadecanoyl-2-(9Z-octadecenoyl)-sn-glycero-3-phosphocholine + CoA. It catalyses the reaction 1-(9Z-octadecenoyl)-sn-glycero-3-phosphoethanolamine + (9Z)-octadecenoyl-CoA = 1,2-di-(9Z-octadecenoyl)-sn-glycero-3-phosphoethanolamine + CoA. Its pathway is lipid metabolism; phospholipid metabolism. In terms of biological role, acyltransferase which catalyzes the transfer of an acyl group from an acyl-CoA to a lysophospholipid leading to the production of a phospholipid and participates in the reacylation step of the phospholipid remodeling pathway also known as the Lands cycle. May catalyze preferentially the acylation of lysophosphatidylethanolamine (1-acyl-sn-glycero-3-phosphoethanolamine or LPE) and lysophosphatidic acid (LPA) and to a lesser extend lysophosphatidylcholine (LPC) and lysophosphatidylserine (LPS). Prefers oleoyl-CoA as the acyl donor. In Gallus gallus (Chicken), this protein is Membrane-bound glycerophospholipid O-acyltransferase 2.